A 296-amino-acid polypeptide reads, in one-letter code: MKFVGAHVSASGGVDNAPLNAMAIGAKAFAVFAKNQRQWVAKPLEEKTIEAFKKNLETAGILPKHVLPHDSYLINLGHPEEEKLEKSRAAFIDELERCNQLGLDKLNFHPGSHLVKIPKKDPEYHEKLMEAELHCLDVIAESMNLAIEATKGSDVKLVIENTAGQGTNLGYKFEHLAHLIEKVEDKSRVGVCLDTCHTFTAGYDLRTREAYDETMDAFERIVGFEYLMGMHINDSKPKLGSRVDRHASLGQGEIGWDAFCFIMNDPRMDDIPLILETIDESLWPEEIKALYALVKK.

Positions 69, 109, 160, 194, 197, 231, 244, 246, and 276 each coordinate Zn(2+).

This sequence belongs to the AP endonuclease 2 family. The cofactor is Zn(2+).

It catalyses the reaction Endonucleolytic cleavage to 5'-phosphooligonucleotide end-products.. Endonuclease IV plays a role in DNA repair. It cleaves phosphodiester bonds at apurinic or apyrimidinic (AP) sites, generating a 3'-hydroxyl group and a 5'-terminal sugar phosphate. This is Probable endonuclease 4 from Sulfurovum sp. (strain NBC37-1).